The following is a 123-amino-acid chain: Putative membrane protein insertion efficiency factor (123 aa).

The interval 1-23 (MGSCGGKHTGKGAPKPYSRNFTD) is disordered.

Belongs to the UPF0161 family.

It is found in the cell inner membrane. Could be involved in insertion of integral membrane proteins into the membrane. In Brucella abortus (strain 2308), this protein is Putative membrane protein insertion efficiency factor.